The primary structure comprises 350 residues: Secreted effector protein PipB2 (350 aa).

Pentapeptide repeat domains follow at residues 162-201 (ANLTAENLCDADLSGADLEGAILFMADCDGANFKGANLSG), 202-241 (ASLGDSNLTNACLEDSIMCGATLDRANLTGANLQHTSLLG), 247-286 (CNCSGANMDHANVSGSTLIRADMSGATLKGATIMAAIMEG), and 287-326 (AVLTRANLQKASFTATNLDGADLSEANLRNTSFKDCTLTD).

As to quaternary structure, interacts with the host kinesin light chain (KLC), a subunit of the kinesin-1 motor complex.

Its subcellular location is the secreted. It is found in the host membrane. Effector proteins function to alter host cell physiology and promote bacterial survival in host tissues. Involved in the reorganization of late endosome/lysosome (LE/Lys) compartments in mammalian cells. Necessary and sufficient to link kinesin-1 onto the Salmonella-containing vacuole (SCV) membrane. Required for centrifugal extension of lysosomal glycoprotein-rich membrane tubules, known as Salmonella-induced filaments (Sifs), away from the SCV and toward the cell periphery. Required for virulence, but not for intracellular survival and replication in phagocytic cells. The chain is Secreted effector protein PipB2 (pipB2) from Salmonella typhi.